The chain runs to 246 residues: MTRSKILVLIPARMASTRLPGKPLLDIAGVPMIVQVLRRAEEAAIGRVAVATDTPEIAAAVTAAGGEVVMTRPDHPSGSDRIYEALCKLDPAGEADFVVNLQGDFPTIDPRSISDVLPPLDDPAVDIATLAAQIHTEEESLNPNVVKAVGSPLGGRRMRALYFTRATAPHGDGPRYHHIGLYAYRRAALERFVRLPPSPLEQQEKLEQLRALEAGMRIDVMVVDAVPRGVDTPADLETARRLLSKA.

It belongs to the KdsB family.

The protein resides in the cytoplasm. It catalyses the reaction 3-deoxy-alpha-D-manno-oct-2-ulosonate + CTP = CMP-3-deoxy-beta-D-manno-octulosonate + diphosphate. It participates in nucleotide-sugar biosynthesis; CMP-3-deoxy-D-manno-octulosonate biosynthesis; CMP-3-deoxy-D-manno-octulosonate from 3-deoxy-D-manno-octulosonate and CTP: step 1/1. It functions in the pathway bacterial outer membrane biogenesis; lipopolysaccharide biosynthesis. In terms of biological role, activates KDO (a required 8-carbon sugar) for incorporation into bacterial lipopolysaccharide in Gram-negative bacteria. In Bradyrhizobium sp. (strain ORS 278), this protein is 3-deoxy-manno-octulosonate cytidylyltransferase.